The following is a 160-amino-acid chain: Large ribosomal subunit protein uL16 (160 aa).

A compositionally biased stretch (polar residues) spans 138–148 (KNLEVSSQENT). Positions 138–160 (KNLEVSSQENTKNNKESQEEVKQ) are disordered. Residues 149-160 (KNNKESQEEVKQ) show a composition bias toward basic and acidic residues.

The protein belongs to the universal ribosomal protein uL16 family. As to quaternary structure, part of the 50S ribosomal subunit.

Binds 23S rRNA and is also seen to make contacts with the A and possibly P site tRNAs. This Prochlorococcus marinus (strain MIT 9312) protein is Large ribosomal subunit protein uL16.